The following is a 309-amino-acid chain: Acetylglutamate kinase (309 aa).

Substrate is bound by residues 69–70, Arg-91, and Asn-194; that span reads GG.

Belongs to the acetylglutamate kinase family. ArgB subfamily.

Its subcellular location is the cytoplasm. The catalysed reaction is N-acetyl-L-glutamate + ATP = N-acetyl-L-glutamyl 5-phosphate + ADP. The protein operates within amino-acid biosynthesis; L-arginine biosynthesis; N(2)-acetyl-L-ornithine from L-glutamate: step 2/4. Functionally, catalyzes the ATP-dependent phosphorylation of N-acetyl-L-glutamate. This is Acetylglutamate kinase from Vesicomyosocius okutanii subsp. Calyptogena okutanii (strain HA).